Here is a 141-residue protein sequence, read N- to C-terminus: Sec-independent protein translocase protein TatB (141 aa).

The helical transmembrane segment at 2–22 (FANVGWGEMLVLVIAGLVILG) threads the bilayer. Positions 92–141 (IFTGRFDSTSSDQPGSGKPPKPQSGPGPAAASGPAATTTPASTPFDPDAT) are disordered. Residues 117-141 (PGPAAASGPAATTTPASTPFDPDAT) are compositionally biased toward low complexity.

Belongs to the TatB family. The Tat system comprises two distinct complexes: a TatABC complex, containing multiple copies of TatA, TatB and TatC subunits, and a separate TatA complex, containing only TatA subunits. Substrates initially bind to the TatABC complex, which probably triggers association of the separate TatA complex to form the active translocon.

The protein resides in the cell membrane. In terms of biological role, part of the twin-arginine translocation (Tat) system that transports large folded proteins containing a characteristic twin-arginine motif in their signal peptide across membranes. Together with TatC, TatB is part of a receptor directly interacting with Tat signal peptides. TatB may form an oligomeric binding site that transiently accommodates folded Tat precursor proteins before their translocation. The protein is Sec-independent protein translocase protein TatB of Mycolicibacterium gilvum (strain PYR-GCK) (Mycobacterium gilvum (strain PYR-GCK)).